An 806-amino-acid polypeptide reads, in one-letter code: Portal protein (806 aa).

The interaction with Cargo protein 1 stretch occupies residues serine 337–glutamate 380. The segment covering lysine 783–isoleucine 792 has biased composition (basic and acidic residues). Residues lysine 783 to lysine 806 are disordered. Positions glutamine 795–lysine 806 are enriched in basic residues.

Homododecamer. Interacts with the Cargo protein 1. Interacts with the major capsid protein.

It localises to the virion. Its function is as follows. Forms the portal vertex of the capsid. Probably involved in head assembly, genome packaging, tail attachment, and genome ejection. This Bacteroides phage crAss001 (Bacteroides phage PhiCrAss001) protein is Portal protein.